Reading from the N-terminus, the 49-residue chain is Fungus-induced-related protein 16 (49 aa).

In Caenorhabditis elegans, this protein is Fungus-induced-related protein 16 (fipr-16).